Consider the following 343-residue polypeptide: MLSYPGELQGCRVILYLVGHHLYLIPTTISMCGCPEEGAYMRRLWGYISIITATIFFGISATLDKIMLSSMHPVTIGAYTYIIAGIFLFFIRETPLREHVLNAINRKGESEARIKRNDYLILLLTALLSTVIAPLLFLTGLGDTTAVNASLILNVEVLFIILLGYLIFRETLQLKDFLGIVLIILGAVYLLTEGDFSTILRNVAVTGNFLVMAAAFFWSLDTVLSKFLSRKRDLIFISGVKSSVGGFVLLIIMLILGINTELPLEMLPYALGVSVFSIGCSFILIYIAIREIGASMVGALFPLSSLFGAIFAFIILREPFSIMQGISGIVMLTGVFILYWNGK.

The next 11 helical transmembrane spans lie at 13–33, 44–64, 71–91, 121–141, 148–168, 177–197, 203–223, 244–264, 269–289, 296–316, and 320–340; these read VILY…SMCG, LWGY…ATLD, MHPV…LFFI, ILLL…LTGL, NASL…YLIF, FLGI…GDFS, VAVT…LDTV, VGGF…ELPL, YALG…YIAI, MVGA…FIIL, and FSIM…ILYW. 2 consecutive EamA domains span residues 55–192 and 216–340; these read IFFG…YLLT and FFWS…ILYW.

Belongs to the EamA transporter family.

It is found in the cell membrane. This is an uncharacterized protein from Methanothermobacter thermautotrophicus (strain ATCC 29096 / DSM 1053 / JCM 10044 / NBRC 100330 / Delta H) (Methanobacterium thermoautotrophicum).